The primary structure comprises 891 residues: DNA mismatch repair protein MutS (891 aa).

Position 646–653 (646–653 (GPNMAGKS)) interacts with ATP.

It belongs to the DNA mismatch repair MutS family.

Functionally, this protein is involved in the repair of mismatches in DNA. It is possible that it carries out the mismatch recognition step. This protein has a weak ATPase activity. This Rickettsia typhi (strain ATCC VR-144 / Wilmington) protein is DNA mismatch repair protein MutS.